A 322-amino-acid polypeptide reads, in one-letter code: Probable uridine nucleosidase 2 (322 aa).

Catalysis depends on residues aspartate 14 and histidine 246.

The protein belongs to the IUNH family. In terms of assembly, component of the NSH heterocomplex made of URH1/NSH1 and URH2/NSH2 which exhibits strong xanthosine nucleosidase activity. Interacts with URH1. As to expression, expressed in roots, seedlings and flowers.

It localises to the cytoplasm. It is found in the cytosol. The enzyme catalyses uridine + H2O = D-ribose + uracil. It carries out the reaction inosine + H2O = hypoxanthine + D-ribose. The catalysed reaction is xanthosine + H2O = D-ribose + xanthine. Functionally, involved in pyrimidine breakdown, especially in response to dark stress. In the presence of URH1, exhibits efficient inosine and xanthosine hydrolytic activities. Support inosine breakdown especially during the late phase of senescence. The polypeptide is Probable uridine nucleosidase 2 (Arabidopsis thaliana (Mouse-ear cress)).